The following is a 395-amino-acid chain: ATP phosphoribosyltransferase regulatory subunit (395 aa).

The protein belongs to the class-II aminoacyl-tRNA synthetase family. HisZ subfamily. Heteromultimer composed of HisG and HisZ subunits.

It is found in the cytoplasm. It participates in amino-acid biosynthesis; L-histidine biosynthesis; L-histidine from 5-phospho-alpha-D-ribose 1-diphosphate: step 1/9. Required for the first step of histidine biosynthesis. May allow the feedback regulation of ATP phosphoribosyltransferase activity by histidine. This Pseudomonas syringae pv. tomato (strain ATCC BAA-871 / DC3000) protein is ATP phosphoribosyltransferase regulatory subunit.